Here is an 871-residue protein sequence, read N- to C-terminus: Espin (871 aa).

ANK repeat units follow at residues 1 to 31 (MALEQALQAARRGDLDVLRSLHAAGLLGPSL), 35 to 66 (LDALPVHHAARSGKLHCLRYLVEEVALPAVSR), 69 to 99 (NGATPAHDAAATGYLSCLQWLLTQGGCRVQE), 103 to 132 (SGATVLHLAARFGHPDVVKWLLYQGGANSA), 137 to 167 (TGALPIHYAAAKGDLPSLKLLVGHYPEGVNA), 171 to 201 (NGATPLYLACQEGHLEVTKYLVQECSADPHL), 205 to 235 (DGMTPLHAAAQMGHNPVLVWLVSFADVSFSE), 239 to 268 (DGATAMHFAASRGHTKVLSWLLLHGAEISQ), and 271 to 300 (WGGTPLHDAAENGELECCQILAVNGAGLDV). Phosphoserine is present on residues Ser338 and Ser342. Disordered regions lie at residues 349–400 (QLDS…RGIP), 416–469 (PEKS…VGLH), 493–750 (KVEL…APGV), and 819–850 (EREQKRKEEERQKLEEIQRAKEQSEKLRTLGY). Over residues 352–365 (SGMSSPNTTMSVQP) the composition is skewed to polar residues. Residues 377 to 395 (FSNYDSCSSSHSSSKGQRS) show a composition bias toward low complexity. Pro residues predominate over residues 428–465 (PSPPPPPPPPPPSFPPPPPPTGTQPPPPPPGYPAPNPP). A phosphoserine mark is found at Ser517, Ser524, and Ser556. Residues 522-548 (QDSELLHRQELLRHSTGLRRQDSDRKQ) show a composition bias toward basic and acidic residues. The segment covering 606 to 629 (LPPPPPPPPLPEALSSPPPAPPLP) has biased composition (pro residues). Polar residues-rich tracts occupy residues 659–670 (KSFNMMSPTGDN) and 685–707 (PTPQSKGLTTVFSGSGQPASQPE). Ser665 is modified (phosphoserine). The WH2 domain occupies 669-686 (DNSELLAEIKAGKSLKPT). A phosphoserine mark is found at Ser704, Ser708, and Ser714. A coiled-coil region spans residues 772–848 (KRQVMVRKLQ…KEQSEKLRTL (77 aa)).

Monomer. Binds F-actin in a Ca(2+)-resistant fashion. Interacts (via N-terminus) with BAIAP2 (via SH3-domain). Interacts with PFN2. Interacts with MYO3A (via C-terminus). Interacts with MYO3B (via C-terminus). Expressed at high concentration in the microvillar parallel actin bundle (PAB) of hair cells stereocilia in the cochlea and vestibular system. Detected also at high levels of a number of other sensory cell types, including taste receptor cells, solitary chemoreceptor cells, vomeronasal sensory neurons and Merkel cells. Isoforms 2, 3, 4 and 5 are expressed in Purkinje cells dendritic spines. Expressed in utricle hair bundles (at protein level).

It is found in the cytoplasm. Its subcellular location is the cytoskeleton. It localises to the cell projection. The protein resides in the stereocilium. The protein localises to the microvillus. It is found in the cell junction. Its subcellular location is the dendritic spine. Multifunctional actin-bundling protein. Plays a major role in regulating the organization, dimension, dynamics and signaling capacities of the actin filament-rich microvilli in the mechanosensory and chemosensory cells. Required for the assembly and stabilization of the stereociliary parallel actin bundles. Plays a crucial role in the formation and maintenance of inner ear hair cell stereocilia. Involved in the elongation of actin in stereocilia. In extrastriolar hair cells, required for targeting MYO3B to stereocilia tips, and for regulation of stereocilia diameter and staircase formation. In Mus musculus (Mouse), this protein is Espin (Espn).